Consider the following 91-residue polypeptide: MNVLHFLILLMSVVSVFCINPEDIGCDDSITPEKFAENDAKCVQCKEQFEETNMLEQCREDCFKGKFFRSCVDHLSGAYDEKDDVEAPPPE.

Positions 1-18 (MNVLHFLILLMSVVSVFC) are cleaved as a signal peptide.

It belongs to the arthropod CHH/MIH/GIH/VIH hormone family. Expressed by the venom gland.

It is found in the secreted. May increase the toxicity of alpha-latrotoxin and/or other venom components. Is non-toxic to mice and to the cockroach Periplaneta americana. In Steatoda grossa (False black widow), this protein is Alpha-latrotoxin associated low molecular weight protein SGV150-311.